Here is a 438-residue protein sequence, read N- to C-terminus: Glutamate-1-semialdehyde 2,1-aminomutase (438 aa).

K272 carries the N6-(pyridoxal phosphate)lysine modification.

This sequence belongs to the class-III pyridoxal-phosphate-dependent aminotransferase family. HemL subfamily. In terms of assembly, homodimer. The cofactor is pyridoxal 5'-phosphate.

The protein localises to the cytoplasm. It carries out the reaction (S)-4-amino-5-oxopentanoate = 5-aminolevulinate. It participates in porphyrin-containing compound metabolism; protoporphyrin-IX biosynthesis; 5-aminolevulinate from L-glutamyl-tRNA(Glu): step 2/2. Its pathway is porphyrin-containing compound metabolism; chlorophyll biosynthesis. The protein is Glutamate-1-semialdehyde 2,1-aminomutase of Chloroflexus aggregans (strain MD-66 / DSM 9485).